The following is a 194-amino-acid chain: Sigma factor AlgU negative regulatory protein (194 aa).

Residues 89–105 (LAVAASVTLAVLAGVRL) traverse the membrane as a helical segment.

Belongs to the RseA family.

It localises to the cell membrane. Its function is as follows. Negative regulator of the sigma factor AlgU. Plays a role in the differentiation of P.aeruginosa into the alginate-producing form. Inactivation of mucA causes a switch from the non-mucoid to mucoid state resulting in constitutive expression of alginate biosynthetic genes. The polypeptide is Sigma factor AlgU negative regulatory protein (mucA) (Pseudomonas aeruginosa (strain ATCC 15692 / DSM 22644 / CIP 104116 / JCM 14847 / LMG 12228 / 1C / PRS 101 / PAO1)).